A 311-amino-acid polypeptide reads, in one-letter code: 4-hydroxyproline 2-epimerase (311 aa).

The Proton acceptor role is filled by Cys88. Substrate contacts are provided by residues 89–90 (GH), His208, and Asp232. The active-site Proton donor is Cys236. 237–238 (GT) lines the substrate pocket.

The protein belongs to the proline racemase family.

It catalyses the reaction trans-4-hydroxy-L-proline = cis-4-hydroxy-D-proline. Its function is as follows. Catalyzes the epimerization of trans-4-hydroxy-L-proline (t4LHyp) to cis-4-hydroxy-D-proline (c4DHyp). Is likely involved in a degradation pathway that converts t4LHyp to alpha-ketoglutarate. Displays no proline racemase activity. The chain is 4-hydroxyproline 2-epimerase from Chromohalobacter salexigens (strain ATCC BAA-138 / DSM 3043 / CIP 106854 / NCIMB 13768 / 1H11).